Reading from the N-terminus, the 512-residue chain is Polyamine oxidase 1 (512 aa).

Residues Glu38 and Arg46 each contribute to the FAD site. Positions 448-470 are disordered; sequence DRMAEPLPRGPDAAADERPPSPR. Glu476 provides a ligand contact to FAD.

Belongs to the flavin monoamine oxidase family. It depends on FAD as a cofactor.

The protein localises to the cytoplasm. It catalyses the reaction spermine + O2 + H2O = 3-aminopropanal + spermidine + H2O2. The enzyme catalyses N(1)-acetylspermine + O2 + H2O = 3-acetamidopropanal + spermidine + H2O2. It carries out the reaction norspermine + O2 + H2O = norspermidine + 3-aminopropanal + H2O2. The catalysed reaction is thermospermine + O2 + H2O = 3-aminopropanal + spermidine + H2O2. It functions in the pathway amine and polyamine degradation; spermine degradation. Functionally, flavoenzyme involved in polyamine back-conversion. Catalyzes the oxidation of the secondary amino group of polyamines, such as spermine and its acetyl derivatives. Substrate preference is thermospermine &gt; spermine &gt; norspermine &gt; N(1)-acetylspermine. No activity detected when putrescine or spermidine are used as substrates. Plays an important role in the regulation of polyamine intracellular concentration. This Oryza sativa subsp. japonica (Rice) protein is Polyamine oxidase 1.